Reading from the N-terminus, the 153-residue chain is Actin-related protein 2/3 complex subunit 5-like protein (153 aa).

S64 carries the post-translational modification Phosphoserine.

Belongs to the ARPC5 family. In terms of assembly, may be a component of the Arp2/3 complex in which it may replace ARPC5.

It localises to the cytoplasm. It is found in the cytoskeleton. May function as component of the Arp2/3 complex which is involved in regulation of actin polymerization and together with an activating nucleation-promoting factor (NPF) mediates the formation of branched actin networks. This chain is Actin-related protein 2/3 complex subunit 5-like protein (Arpc5l), found in Mus musculus (Mouse).